We begin with the raw amino-acid sequence, 194 residues long: Leucyl/phenylalanyl-tRNA--protein transferase (194 aa).

Belongs to the L/F-transferase family.

It localises to the cytoplasm. It catalyses the reaction N-terminal L-lysyl-[protein] + L-leucyl-tRNA(Leu) = N-terminal L-leucyl-L-lysyl-[protein] + tRNA(Leu) + H(+). The catalysed reaction is N-terminal L-arginyl-[protein] + L-leucyl-tRNA(Leu) = N-terminal L-leucyl-L-arginyl-[protein] + tRNA(Leu) + H(+). The enzyme catalyses L-phenylalanyl-tRNA(Phe) + an N-terminal L-alpha-aminoacyl-[protein] = an N-terminal L-phenylalanyl-L-alpha-aminoacyl-[protein] + tRNA(Phe). Functions in the N-end rule pathway of protein degradation where it conjugates Leu, Phe and, less efficiently, Met from aminoacyl-tRNAs to the N-termini of proteins containing an N-terminal arginine or lysine. The chain is Leucyl/phenylalanyl-tRNA--protein transferase from Pelodictyon phaeoclathratiforme (strain DSM 5477 / BU-1).